The sequence spans 138 residues: RuBisCO chaperone RbcX (138 aa).

Residues 118–138 (VDNFPSETSNGESNNNDSPPS) are disordered. Over residues 122–138 (PSETSNGESNNNDSPPS) the composition is skewed to polar residues.

The protein belongs to the RbcX family. As to quaternary structure, homodimer. Interacts with the exposed C-terminal peptide of RbcL via its central cleft, contacts a second RbcL monomer via its peripheral polar surface.

It localises to the carboxysome. The protein localises to the cytoplasm. In terms of biological role, an RbcL-specific chaperone. The central cleft of the RbcX homodimer (RbcX2) binds the C-terminus of an RbcL monomer, stabilizing the C-terminus and probably preventing its reassociation with chaperonin GroEL-ES. At the same time the peripheral region of RbcX2 binds a second RbcL monomer, bridging the RbcL homodimers in the correct orientation. The RbcX2(2)-bound RbcL dimers then assemble into the RbcL8 core (RbcL8-(RbcX2)8). RbcS binding triggers the release of RbcX2. The protein is RuBisCO chaperone RbcX of Synechocystis sp. (strain ATCC 27184 / PCC 6803 / Kazusa).